Reading from the N-terminus, the 78-residue chain is Major outer membrane lipoprotein Lpp (78 aa).

The N-terminal stretch at 1 to 19 (MKAKIVLGAVILASGLLAG) is a signal peptide. Residue Cys20 is the site of N-palmitoyl cysteine attachment. The S-diacylglycerol cysteine moiety is linked to residue Cys20. 2 consecutive repeats follow at residues 25-35 (NAQLDQISSDV) and 39-49 (NTQVQQLSSDV). Residues 28–62 (LDQISSDVNRLNTQVQQLSSDVQSANAQAKAAYEA) are a coiled coil. Lys78 bears the N6-murein peptidoglycan lysine mark.

This sequence belongs to the Lpp family. In terms of assembly, homotrimer.

It localises to the cell outer membrane. The protein resides in the secreted. The protein localises to the cell wall. Its function is as follows. A highly abundant outer membrane lipoprotein that controls the distance between the inner and outer membranes. The only protein known to be covalently linked to the peptidoglycan network (PGN). Also non-covalently binds the PGN. The link between the cell outer membrane and PGN contributes to maintenance of the structural and functional integrity of the cell envelope, and maintains the correct distance between the PGN and the outer membrane. In Proteus mirabilis, this protein is Major outer membrane lipoprotein Lpp.